Here is a 40-residue protein sequence, read N- to C-terminus: Photosystem II reaction center protein J (40 aa).

A helical membrane pass occupies residues 8-28; it reads IPLWIIGTVTGIIVIGLIGIF.

The protein belongs to the PsbJ family. As to quaternary structure, PSII is composed of 1 copy each of membrane proteins PsbA, PsbB, PsbC, PsbD, PsbE, PsbF, PsbH, PsbI, PsbJ, PsbK, PsbL, PsbM, PsbT, PsbX, PsbY, PsbZ, Psb30/Ycf12, at least 3 peripheral proteins of the oxygen-evolving complex and a large number of cofactors. It forms dimeric complexes.

It localises to the plastid. It is found in the chloroplast thylakoid membrane. In terms of biological role, one of the components of the core complex of photosystem II (PSII). PSII is a light-driven water:plastoquinone oxidoreductase that uses light energy to abstract electrons from H(2)O, generating O(2) and a proton gradient subsequently used for ATP formation. It consists of a core antenna complex that captures photons, and an electron transfer chain that converts photonic excitation into a charge separation. This Morus indica (Mulberry) protein is Photosystem II reaction center protein J.